Consider the following 442-residue polypeptide: C4-dicarboxylate transport protein 4 (442 aa).

6 helical membrane-spanning segments follow: residues 20–40 (ILYV…YFYP), 53–73 (FIAL…VHGI), 90–110 (LIYF…VGEV), 160–180 (GDLL…AFLG), 209–229 (PVGA…GSLL), and 233–253 (ALIG…LGAI).

It belongs to the dicarboxylate/amino acid:cation symporter (DAACS) (TC 2.A.23) family.

It is found in the cell inner membrane. Its function is as follows. Responsible for the transport of dicarboxylates such as succinate, fumarate, and malate from the periplasm across the membrane. The chain is C4-dicarboxylate transport protein 4 from Bradyrhizobium diazoefficiens (strain JCM 10833 / BCRC 13528 / IAM 13628 / NBRC 14792 / USDA 110).